A 91-amino-acid chain; its full sequence is Large ribosomal subunit protein uL23c (91 aa).

Belongs to the universal ribosomal protein uL23 family. As to quaternary structure, part of the 50S ribosomal subunit.

It is found in the plastid. Its subcellular location is the chloroplast. Functionally, binds to 23S rRNA. The polypeptide is Large ribosomal subunit protein uL23c (rpl23) (Chaetosphaeridium globosum (Charophycean green alga)).